A 249-amino-acid polypeptide reads, in one-letter code: tRNA pseudouridine synthase A (249 aa).

Asp53 acts as the Nucleophile in catalysis. Substrate is bound at residue Tyr111.

It belongs to the tRNA pseudouridine synthase TruA family. Homodimer.

The catalysed reaction is uridine(38/39/40) in tRNA = pseudouridine(38/39/40) in tRNA. Functionally, formation of pseudouridine at positions 38, 39 and 40 in the anticodon stem and loop of transfer RNAs. This Streptococcus pneumoniae serotype 19F (strain G54) protein is tRNA pseudouridine synthase A.